A 215-amino-acid chain; its full sequence is Putative B3 domain-containing protein Os11g0625400 (215 aa).

A DNA-binding region (TF-B3 1) is located at residues 1-51 (MTVELEKIAGSFFISKGWKTFVHRTGLLSGQYIRFQVLTPSKINVLLFDKK). The tract at residues 92–117 (SHTSNKETSSDSRTESMTDIPSSSDN) is disordered. The span at 95–107 (SNKETSSDSRTES) shows a compositional bias: basic and acidic residues. Residues 108–117 (MTDIPSSSDN) are compositionally biased toward polar residues. Residues 123 to 215 (DIKNYISIIG…PNVKITIDVL (93 aa)) constitute a DNA-binding region (TF-B3 2).

The protein localises to the nucleus. This chain is Putative B3 domain-containing protein Os11g0625400, found in Oryza sativa subsp. japonica (Rice).